The following is a 512-amino-acid chain: Cytochrome P450 1A1 (512 aa).

The tract at residues 29 to 40 (SRPRVPKGLKNP) is mitochondrial targeting signal. Serine 67 carries an O-linked (GlcNAc) serine glycan. Phenylalanine 224 lines the substrate pocket. Cysteine 457 contributes to the heme binding site.

This sequence belongs to the cytochrome P450 family. In terms of assembly, interacts with cytosolic chaperones HSP70 and HSP90; this interaction is required for initial targeting to mitochondria. Interacts (via mitochondrial targeting signal) with TOMM40 (via N-terminus); this interaction is required for translocation across the mitochondrial outer membrane. Requires heme as cofactor.

Its subcellular location is the endoplasmic reticulum membrane. It localises to the mitochondrion inner membrane. The protein resides in the microsome membrane. The protein localises to the cytoplasm. The enzyme catalyses an organic molecule + reduced [NADPH--hemoprotein reductase] + O2 = an alcohol + oxidized [NADPH--hemoprotein reductase] + H2O + H(+). It carries out the reaction estrone + reduced [NADPH--hemoprotein reductase] + O2 = 2-hydroxyestrone + oxidized [NADPH--hemoprotein reductase] + H2O + H(+). It catalyses the reaction estrone + reduced [NADPH--hemoprotein reductase] + O2 = 4-hydroxyestrone + oxidized [NADPH--hemoprotein reductase] + H2O + H(+). The catalysed reaction is estrone + reduced [NADPH--hemoprotein reductase] + O2 = 6alpha-hydroxyestrone + oxidized [NADPH--hemoprotein reductase] + H2O + H(+). The enzyme catalyses estrone + reduced [NADPH--hemoprotein reductase] + O2 = 15alpha-hydroxyestrone + oxidized [NADPH--hemoprotein reductase] + H2O + H(+). It carries out the reaction estrone + reduced [NADPH--hemoprotein reductase] + O2 = 16alpha-hydroxyestrone + oxidized [NADPH--hemoprotein reductase] + H2O + H(+). It catalyses the reaction 17beta-estradiol + reduced [NADPH--hemoprotein reductase] + O2 = 2-hydroxy-17beta-estradiol + oxidized [NADPH--hemoprotein reductase] + H2O + H(+). The catalysed reaction is 17beta-estradiol + reduced [NADPH--hemoprotein reductase] + O2 = 4-hydroxy-17beta-estradiol + oxidized [NADPH--hemoprotein reductase] + H2O + H(+). The enzyme catalyses 17beta-estradiol + reduced [NADPH--hemoprotein reductase] + O2 = 6alpha-hydroxy-17beta-estradiol + oxidized [NADPH--hemoprotein reductase] + H2O + H(+). It carries out the reaction 17beta-estradiol + reduced [NADPH--hemoprotein reductase] + O2 = 7alpha-hydroxy-17beta-estradiol + oxidized [NADPH--hemoprotein reductase] + H2O + H(+). It catalyses the reaction 17beta-estradiol + reduced [NADPH--hemoprotein reductase] + O2 = 15alpha-hydroxy-17beta-estradiol + oxidized [NADPH--hemoprotein reductase] + H2O + H(+). The catalysed reaction is (5Z,8Z,11Z)-eicosatrienoate + reduced [NADPH--hemoprotein reductase] + O2 = 19-hydroxy-(5Z,8Z,11Z)-eicosatrienoate + oxidized [NADPH--hemoprotein reductase] + H2O + H(+). The enzyme catalyses (5Z,8Z,11Z,14Z)-eicosatetraenoate + reduced [NADPH--hemoprotein reductase] + O2 = 16-hydroxy-(5Z,8Z,11Z,14Z)-eicosatetraenoate + oxidized [NADPH--hemoprotein reductase] + H2O + H(+). It carries out the reaction (5Z,8Z,11Z,14Z)-eicosatetraenoate + reduced [NADPH--hemoprotein reductase] + O2 = 17-hydroxy-(5Z,8Z,11Z,14Z)-eicosatetraenoate + oxidized [NADPH--hemoprotein reductase] + H2O + H(+). It catalyses the reaction (5Z,8Z,11Z,14Z)-eicosatetraenoate + reduced [NADPH--hemoprotein reductase] + O2 = 18-hydroxy-(5Z,8Z,11Z,14Z)-eicosatetraenoate + oxidized [NADPH--hemoprotein reductase] + H2O + H(+). The catalysed reaction is (5Z,8Z,11Z,14Z)-eicosatetraenoate + reduced [NADPH--hemoprotein reductase] + O2 = 19-hydroxy-(5Z,8Z,11Z,14Z)-eicosatetraenoate + oxidized [NADPH--hemoprotein reductase] + H2O + H(+). The enzyme catalyses (5Z,8Z,11Z,14Z,17Z)-eicosapentaenoate + reduced [NADPH--hemoprotein reductase] + O2 = 19-hydroxy-(5Z,8Z,11Z,14Z,17Z)-eicosapentaenoate + oxidized [NADPH--hemoprotein reductase] + H2O + H(+). It carries out the reaction (5Z,8Z,11Z,14Z)-eicosatetraenoate + reduced [NADPH--hemoprotein reductase] + O2 = (8R,9S)-epoxy-(5Z,11Z,14Z)-eicosatrienoate + oxidized [NADPH--hemoprotein reductase] + H2O + H(+). It catalyses the reaction (5Z,8Z,11Z,14Z)-eicosatetraenoate + reduced [NADPH--hemoprotein reductase] + O2 = (11R,12S)-epoxy-(5Z,8Z,14Z)-eicosatrienoate + oxidized [NADPH--hemoprotein reductase] + H2O + H(+). The catalysed reaction is (5Z,8Z,11Z,14Z)-eicosatetraenoate + reduced [NADPH--hemoprotein reductase] + O2 = (14S,15R)-epoxy-(5Z,8Z,11Z)-eicosatrienoate + oxidized [NADPH--hemoprotein reductase] + H2O + H(+). The enzyme catalyses (5Z,8Z,11Z,14Z)-eicosatetraenoate + reduced [NADPH--hemoprotein reductase] + O2 = (14R,15S)-epoxy-(5Z,8Z,11Z)-eicosatrienoate + oxidized [NADPH--hemoprotein reductase] + H2O + H(+). It carries out the reaction (5Z,8Z,11Z,14Z,17Z)-eicosapentaenoate + reduced [NADPH--hemoprotein reductase] + O2 = (17R,18S)-epoxy-(5Z,8Z,11Z,14Z)-eicosatetraenoate + oxidized [NADPH--hemoprotein reductase] + H2O + H(+). It catalyses the reaction (4Z,7Z,10Z,13Z,16Z,19Z)-docosahexaenoate + reduced [NADPH--hemoprotein reductase] + O2 = (19S,20R)-epoxy-(4Z,7Z,10Z,13Z,16Z)-docosapentaenoate + oxidized [NADPH--hemoprotein reductase] + H2O + H(+). The catalysed reaction is (4Z,7Z,10Z,13Z,16Z,19Z)-docosahexaenoate + reduced [NADPH--hemoprotein reductase] + O2 = (19R,20S)-epoxy-(4Z,7Z,10Z,13Z,16Z)-docosapentaenoate + oxidized [NADPH--hemoprotein reductase] + H2O + H(+). The enzyme catalyses all-trans-retinol + reduced [NADPH--hemoprotein reductase] + O2 = all-trans-retinal + oxidized [NADPH--hemoprotein reductase] + 2 H2O + H(+). It carries out the reaction all-trans-retinal + reduced [NADPH--hemoprotein reductase] + O2 = all-trans-retinoate + oxidized [NADPH--hemoprotein reductase] + H2O + 2 H(+). It catalyses the reaction (13S)-hydroperoxy-(9Z,11E)-octadecadienoate = 13-oxo-(9Z,11E)-octadecadienoate + H2O. The catalysed reaction is (12S)-hydroperoxy-(5Z,8Z,10E,14Z)-eicosatetraenoate = 12-oxo-(5Z,8Z,10E,14Z)-eicosatetraenoate + H2O. The enzyme catalyses (15S)-hydroperoxy-(5Z,8Z,11Z,13E)-eicosatetraenoate = 15-oxo-(5Z,8Z,11Z,13E)-eicosatetraenoate + H2O. It carries out the reaction (5S)-hydroperoxy-(6E,8Z,11Z,14Z)-eicosatetraenoate = 5-oxo-(6E,8Z,11Z,14Z)-eicosatetraenoate + H2O. Its pathway is steroid hormone biosynthesis. It participates in lipid metabolism; fatty acid metabolism. The protein operates within cofactor metabolism; retinol metabolism. A cytochrome P450 monooxygenase involved in the metabolism of various endogenous substrates, including fatty acids, steroid hormones and vitamins. Mechanistically, uses molecular oxygen inserting one oxygen atom into a substrate, and reducing the second into a water molecule, with two electrons provided by NADPH via cytochrome P450 reductase (CPR; NADPH-ferrihemoprotein reductase). Catalyzes the hydroxylation of carbon-hydrogen bonds. Exhibits high catalytic activity for the formation of hydroxyestrogens from estrone (E1) and 17beta-estradiol (E2), namely 2-hydroxy E1 and E2, as well as D-ring hydroxylated E1 and E2 at the C15alpha and C16alpha positions. Displays different regioselectivities for polyunsaturated fatty acids (PUFA) hydroxylation. Catalyzes the epoxidation of double bonds of certain PUFA. Converts arachidonic acid toward epoxyeicosatrienoic acid (EET) regioisomers, 8,9-, 11,12-, and 14,15-EET, that function as lipid mediators in the vascular system. Displays an absolute stereoselectivity in the epoxidation of eicosapentaenoic acid (EPA) producing the 17(R),18(S) enantiomer. May play an important role in all-trans retinoic acid biosynthesis in extrahepatic tissues. Catalyzes two successive oxidative transformation of all-trans retinol to all-trans retinal and then to the active form all-trans retinoic acid. May also participate in eicosanoids metabolism by converting hydroperoxide species into oxo metabolites (lipoxygenase-like reaction, NADPH-independent). The sequence is that of Cytochrome P450 1A1 (CYP1A1) from Macaca fascicularis (Crab-eating macaque).